A 680-amino-acid chain; its full sequence is Calcium-binding and coiled-coil domain-containing protein 1 (680 aa).

Positions 1-30 are p300 KIX-binding; sequence MEESSLSRAPSRGGVNFLNVARTYIPNTKV. The tract at residues 1–190 is N-terminal AD (CTNNB1 binding site); that stretch reads MEESSLSRAP…VQELEKALAA (190 aa). The residue at position 4 (Ser-4) is a Phosphoserine. The tract at residues 45–125 is interaction with GATA1; it reads SDWIGIFKVE…FQFREPRPMD (81 aa). Coiled-coil stretches lie at residues 145-205, 232-339, and 417-514; these read KATV…YKGL, ELEE…AELE, and QSVE…ADEK. The interval 501 to 680 is C-terminal AD (CTNNB1 binding site); interaction with CCAR1; that stretch reads RKLEARLEKV…HTYTHTHTHA (180 aa). The segment at 511 to 606 is disordered; the sequence is ADEKWSEDPA…DSEAEDEKSV (96 aa). The UBZ1-type zinc-finger motif lies at 654–679; sequence WKECPICKERFPVHTQTHTYTHTHTH. Zn(2+) is bound by residues Cys-657, Cys-660, His-675, and His-679.

It belongs to the CALCOCO family. In terms of assembly, part of a calphoglin complex consisting of CALCOCO1, PPA1 and PGM. Interacts with the bHLH-PAS domains of GRIP1, AHR and ARNT. Interacts with CTNNB1 via both its N- and C-terminal regions. Interacts with EP300. Interacts with CCAR1 (via N-terminus) and GATA1.

The protein resides in the cytoplasm. It localises to the nucleus. Its function is as follows. Functions as a coactivator for aryl hydrocarbon and nuclear receptors (NR). Recruited to promoters through its contact with the N-terminal basic helix-loop-helix-Per-Arnt-Sim (PAS) domain of transcription factors or coactivators, such as NCOA2. During ER-activation acts synergistically in combination with other NCOA2-binding proteins, such as EP300, CREBBP and CARM1. Involved in the transcriptional activation of target genes in the Wnt/CTNNB1 pathway. Functions as a secondary coactivator in LEF1-mediated transcriptional activation via its interaction with CTNNB1. Coactivator function for nuclear receptors and LEF1/CTNNB1 involves differential utilization of two different activation regions. In association with CCAR1 enhances GATA1- and MED1-mediated transcriptional activation from the gamma-globin promoter during erythroid differentiation of K562 erythroleukemia cells. In terms of biological role, seems to enhance inorganic pyrophosphatase thus activating phosphogluomutase (PMG). Probably functions as a component of the calphoglin complex, which is involved in linking cellular metabolism (phosphate and glucose metabolism) with other core functions including protein synthesis and degradation, calcium signaling and cell growth. In Bos taurus (Bovine), this protein is Calcium-binding and coiled-coil domain-containing protein 1 (CALCOCO1).